A 346-amino-acid polypeptide reads, in one-letter code: Cell division protein FtsZ 2 (346 aa).

GTP-binding positions include 23 to 27 (GGGGN), 110 to 112 (GTG), E141, R145, and D189. The tract at residues 320–346 (SNRSAQPTAPEAMNGQTAAAVPSRTLQ) is disordered.

The protein belongs to the FtsZ family. In terms of assembly, homodimer. Polymerizes to form a dynamic ring structure in a strictly GTP-dependent manner. Interacts directly with several other division proteins.

The protein resides in the cytoplasm. Functionally, essential cell division protein that forms a contractile ring structure (Z ring) at the future cell division site. The regulation of the ring assembly controls the timing and the location of cell division. One of the functions of the FtsZ ring is to recruit other cell division proteins to the septum to produce a new cell wall between the dividing cells. Binds GTP and shows GTPase activity. This Rhizobium meliloti (strain 1021) (Ensifer meliloti) protein is Cell division protein FtsZ 2.